A 207-amino-acid polypeptide reads, in one-letter code: Ribosomal RNA small subunit methyltransferase G (207 aa).

S-adenosyl-L-methionine-binding positions include Gly74, Leu79, 125–126 (VE), and Arg140.

It belongs to the methyltransferase superfamily. RNA methyltransferase RsmG family.

Its subcellular location is the cytoplasm. The catalysed reaction is guanosine(527) in 16S rRNA + S-adenosyl-L-methionine = N(7)-methylguanosine(527) in 16S rRNA + S-adenosyl-L-homocysteine. Specifically methylates the N7 position of guanine in position 527 of 16S rRNA. This chain is Ribosomal RNA small subunit methyltransferase G, found in Shewanella halifaxensis (strain HAW-EB4).